Consider the following 243-residue polypeptide: Type II restriction enzyme NlaIV (243 aa).

It carries out the reaction Endonucleolytic cleavage of DNA to give specific double-stranded fragments with terminal 5'-phosphates.. In terms of biological role, a P subtype restriction enzyme that recognizes the double-stranded sequence 5'-GGNNCC-3' and cleaves after N-3. This is Type II restriction enzyme NlaIV (nlaIVR) from Neisseria lactamica.